Reading from the N-terminus, the 344-residue chain is MEKIYYDADISIQPLADKRIAVIGYGSQGHAHAQNLRDSGFDVVIGLRPGSSWAKAEADGFRVMAVGEAVEESDVIMILLPDERQPAVYEREIRPYLTAGKALAFAHGFNIHFSQIQPPKDVDVFMVAPKGPGHLVRRVYEAGGGVPALIAVHQDASGQAKDLALAYARGIGAGRAGILTTTFREETETDLFGEQAVLCGGLSALIKAGFETLVEAGYQPEIAYFECLHEMKLIVDLIYEGGLEYMRYSISDTAQWGDFTSGPRIINEETKKEMRRILADIQSGAFAKSWILENQANRPMFNAINRRELEHPIEVVGRKLRSMMPFIKAKRPGDDRVPATADRA.

A KARI N-terminal Rossmann domain is found at 2–181; it reads EKIYYDADIS…GAGRAGILTT (180 aa). NADP(+)-binding positions include 25–28, Arg48, Ser52, and 82–85; these read YGSQ and DERQ. His107 is a catalytic residue. Residue Gly133 coordinates NADP(+). Positions 182 to 327 constitute a KARI C-terminal knotted domain; that stretch reads TFREETETDL…RKLRSMMPFI (146 aa). The Mg(2+) site is built by Asp190, Glu194, Glu226, and Glu230. Residue Ser251 participates in substrate binding.

This sequence belongs to the ketol-acid reductoisomerase family. The cofactor is Mg(2+).

The enzyme catalyses (2R)-2,3-dihydroxy-3-methylbutanoate + NADP(+) = (2S)-2-acetolactate + NADPH + H(+). It carries out the reaction (2R,3R)-2,3-dihydroxy-3-methylpentanoate + NADP(+) = (S)-2-ethyl-2-hydroxy-3-oxobutanoate + NADPH + H(+). Its pathway is amino-acid biosynthesis; L-isoleucine biosynthesis; L-isoleucine from 2-oxobutanoate: step 2/4. The protein operates within amino-acid biosynthesis; L-valine biosynthesis; L-valine from pyruvate: step 2/4. Functionally, involved in the biosynthesis of branched-chain amino acids (BCAA). Catalyzes an alkyl-migration followed by a ketol-acid reduction of (S)-2-acetolactate (S2AL) to yield (R)-2,3-dihydroxy-isovalerate. In the isomerase reaction, S2AL is rearranged via a Mg-dependent methyl migration to produce 3-hydroxy-3-methyl-2-ketobutyrate (HMKB). In the reductase reaction, this 2-ketoacid undergoes a metal-dependent reduction by NADPH to yield (R)-2,3-dihydroxy-isovalerate. The protein is Ketol-acid reductoisomerase (NADP(+)) of Alicyclobacillus acidocaldarius subsp. acidocaldarius (strain ATCC 27009 / DSM 446 / BCRC 14685 / JCM 5260 / KCTC 1825 / NBRC 15652 / NCIMB 11725 / NRRL B-14509 / 104-IA) (Bacillus acidocaldarius).